Consider the following 860-residue polypeptide: Alanine--tRNA ligase (860 aa).

Positions 553, 557, 655, and 659 each coordinate Zn(2+).

It belongs to the class-II aminoacyl-tRNA synthetase family. It depends on Zn(2+) as a cofactor.

The protein localises to the cytoplasm. The catalysed reaction is tRNA(Ala) + L-alanine + ATP = L-alanyl-tRNA(Ala) + AMP + diphosphate. Catalyzes the attachment of alanine to tRNA(Ala) in a two-step reaction: alanine is first activated by ATP to form Ala-AMP and then transferred to the acceptor end of tRNA(Ala). Also edits incorrectly charged Ser-tRNA(Ala) and Gly-tRNA(Ala) via its editing domain. This Legionella pneumophila (strain Paris) protein is Alanine--tRNA ligase.